Here is a 348-residue protein sequence, read N- to C-terminus: MTAYEELRTKLVLAPKRWLITGVAGFIGSGLLEELLFLNQTVIGLDNFSTGYQHNLDDVRTSVSEEQWSRFIFIQGDIRKFTDCQKACKNVDYVLHQAALGSVPRSLKDPIATNSANIDGFLNMLTAARDAHVSSFTYAASSSTYGDHPDLPKIEERIGRPLSPYAVTKYVNELYADVFARSYEFNAIGLRYFNVFGRRQNPNGAYSAVIPRWILSLLKDEPIYINGDGSTSRDFCYIENVIQANLLSATTNDLASKNKVYNVAVGDRTSLNELYYLIRDGLNLWRNEQSRAEPIYKDFRDGDVKHSQADITKIKTFLSYEPEFDIKEGLKQTLKWYIDKHSTLYSSV.

NAD(+)-binding residues include Phe26, Ile27, Asp46, Thr50, Gly51, Asp77, Ile78, Gln97, Tyr165, Lys169, and Val195. Tyr165 (proton acceptor) is an active-site residue.

The protein belongs to the NAD(P)-dependent epimerase/dehydratase family. As to quaternary structure, homodimer. NAD(+) serves as cofactor.

The enzyme catalyses UDP-2-acetamido-2-deoxy-alpha-D-glucuronate = UDP-2-acetamido-2-deoxy-alpha-D-galacturonate. The catalysed reaction is UDP-N-acetyl-alpha-D-glucosamine = UDP-N-acetyl-alpha-D-galactosamine. It functions in the pathway capsule biogenesis; capsule polysaccharide biosynthesis. It participates in glycan metabolism; Vi-antigen biosynthesis. Functionally, epimerase required for the biosynthesis of the capsular polysaccharide, commonly referred as the Vi antigen, an important virulence factor. Catalyzes the reversible epimerization of UDP-N-acetylglucosaminuronic acid (UDP-GlcNAcA) to UDP-N-acetylgalactosaminuronic acid (UDP-GalNAcA). Also catalyzes, with lower efficiency, the reversible epimerization of UDP-N-acetylglucosamine (UDP-GlcNAc) to UDP-N-acetylgalactosamine (UDP-GalNAc). Cannot use UDP-glucose (UDP-Glc) and UDP-galactose (UDP-Gal) as substrates. The chain is UDP-N-acetyl-alpha-D-glucosaminouronate 4-epimerase from Salmonella typhi.